The chain runs to 182 residues: MSTQDLEASMRKSVEATQRNFNTIRTGRANSSLLDRISVEYYGAETPLKSLATLSTPDSQTIQIQPFDISALASIEKAIAMSELGFTPNNDGKIIRINVPPLTEERRKEFCKLASKYAEEGKVALRNLRRDAIDKIKKQEKEGEFSEDQSRDEQDGVQKTLDKFIAELEKHLASKEADILKV.

Belongs to the RRF family.

It is found in the cytoplasm. Functionally, responsible for the release of ribosomes from messenger RNA at the termination of protein biosynthesis. May increase the efficiency of translation by recycling ribosomes from one round of translation to another. This Synechococcus sp. (strain CC9605) protein is Ribosome-recycling factor.